Here is a 463-residue protein sequence, read N- to C-terminus: ATP synthase subunit beta (463 aa).

An ATP-binding site is contributed by 152–159 (GGAGVGKT).

This sequence belongs to the ATPase alpha/beta chains family. As to quaternary structure, F-type ATPases have 2 components, CF(1) - the catalytic core - and CF(0) - the membrane proton channel. CF(1) has five subunits: alpha(3), beta(3), gamma(1), delta(1), epsilon(1). CF(0) has three main subunits: a(1), b(2) and c(9-12). The alpha and beta chains form an alternating ring which encloses part of the gamma chain. CF(1) is attached to CF(0) by a central stalk formed by the gamma and epsilon chains, while a peripheral stalk is formed by the delta and b chains.

The protein localises to the cell inner membrane. The enzyme catalyses ATP + H2O + 4 H(+)(in) = ADP + phosphate + 5 H(+)(out). Its function is as follows. Produces ATP from ADP in the presence of a proton gradient across the membrane. The catalytic sites are hosted primarily by the beta subunits. The chain is ATP synthase subunit beta from Shewanella sp. (strain ANA-3).